Consider the following 497-residue polypeptide: COP9 signalosome complex subunit 6 (497 aa).

An MPN domain is found at 21–162 (VALHPLPILE…LTIYESNLEI (142 aa)). 3 disordered regions span residues 230-282 (ATED…KNRD), 324-350 (YLSSGDASSQQQQQQQQQQQTEGLDQP), and 435-497 (AKNS…RFDH). Residues 236–246 (SDKPLMKKVVD) are compositionally biased toward basic and acidic residues. Low complexity-rich tracts occupy residues 258–272 (SDDAAAEAPTTSSAA) and 333–343 (QQQQQQQQQQQ). Over residues 440 to 453 (RREQASHGGGERFN) the composition is skewed to basic and acidic residues. The segment covering 475-488 (VGEGSASGSGGSGP) has biased composition (gly residues).

Belongs to the peptidase M67A family. CSN6 subfamily. In terms of assembly, component of the COP9 signalosome (CSN) complex.

The protein resides in the cytoplasm. It localises to the nucleus. Functionally, component of the COP9 signalosome (CSN) complex that acts as an regulator of the ubiquitin (Ubl) conjugation pathway by mediating the deneddylation of the cullin subunit of SCF-type E3 ubiquitin-protein ligase complexes. The CSN complex is involved in the regulation of the circadian clock through its control of the stability of the SCF(FWD1) complex. This Neurospora crassa (strain ATCC 24698 / 74-OR23-1A / CBS 708.71 / DSM 1257 / FGSC 987) protein is COP9 signalosome complex subunit 6 (csn-6).